A 600-amino-acid polypeptide reads, in one-letter code: ATP-dependent lipid A-core flippase (600 aa).

Helical transmembrane passes span 28–48, 80–100, 159–179, 182–202, 267–287, and 295–315; these read TLSILGLIVYGLVDAAFIAFI, VMLMAPLVVIGMFTLRGVANF, ALISIVRDSITVIGMLALMFF, WKLSLCILVIGPLMGVVISIV, VSQPVIMIIGSFALAFVLYAA, and ELTAGTFAAILGAMLAMLQPI. An ABC transmembrane type-1 domain is found at 29 to 327; it reads LSILGLIVYG…LTRVNAEFQR (299 aa). The 238-residue stretch at 359-596 folds into the ABC transporter domain; the sequence is LRFDNVSFSY…KGAYAGLYQM (238 aa). 393-400 contributes to the ATP binding site; sequence GRSGSGKS.

It belongs to the ABC transporter superfamily. Lipid exporter (TC 3.A.1.106) family. As to quaternary structure, homodimer.

It is found in the cell inner membrane. The catalysed reaction is ATP + H2O + lipid A-core oligosaccharideSide 1 = ADP + phosphate + lipid A-core oligosaccharideSide 2.. In terms of biological role, involved in lipopolysaccharide (LPS) biosynthesis. Translocates lipid A-core from the inner to the outer leaflet of the inner membrane. Transmembrane domains (TMD) form a pore in the inner membrane and the ATP-binding domain (NBD) is responsible for energy generation. In Shewanella denitrificans (strain OS217 / ATCC BAA-1090 / DSM 15013), this protein is ATP-dependent lipid A-core flippase.